The sequence spans 143 residues: Probable glycine cleavage system H protein (143 aa).

The Lipoyl-binding domain maps to 36 to 118; sequence VATVGITDFA…YGEGWIFKIK (83 aa). The residue at position 77 (lysine 77) is an N6-lipoyllysine.

The protein belongs to the GcvH family. The glycine cleavage system is composed of four proteins: P, T, L and H. (R)-lipoate is required as a cofactor.

Functionally, the glycine cleavage system catalyzes the degradation of glycine. The H protein shuttles the methylamine group of glycine from the P protein to the T protein. The sequence is that of Probable glycine cleavage system H protein from Aeropyrum pernix (strain ATCC 700893 / DSM 11879 / JCM 9820 / NBRC 100138 / K1).